The chain runs to 180 residues: Dual-action ribosomal maturation protein DarP (180 aa).

The protein belongs to the DarP family.

It localises to the cytoplasm. Its function is as follows. Member of a network of 50S ribosomal subunit biogenesis factors which assembles along the 30S-50S interface, preventing incorrect 23S rRNA structures from forming. Promotes peptidyl transferase center (PTC) maturation. The sequence is that of Dual-action ribosomal maturation protein DarP from Pasteurella multocida (strain Pm70).